Here is a 402-residue protein sequence, read N- to C-terminus: Tumor necrosis factor receptor superfamily member 11B (402 aa).

An N-terminal signal peptide occupies residues 1–21 (MNKLLCCALVFLDISIKWTTQ). TNFR-Cys repeat units follow at residues 24–62 (FPPKYLHYDPESSRQLMCDKCPPGTFLKQPCTARRKTVC), 64–105 (PCPD…NRVC), 106–142 (ECEEGRYLELEFCLKHRSCPPGFGVLHPGTPERNTVC), and 144–185 (RCPD…DNIC). Intrachain disulfides connect C41-C54, C44-C62, C65-C80, C83-C97, C87-C105, C107-C118, C124-C142, and C145-C160. N-linked (GlcNAc...) asparagine glycans are attached at residues N165 and N178. C166 and C185 are oxidised to a cystine. Death domains are found at residues 198–269 (IDMT…DMVK) and 270–365 (KIIQ…VIQS).

In terms of assembly, homodimer. Interacts with TNFSF10 and TNFSF11. Post-translationally, N-glycosylated. Contains sialic acid residues.

It localises to the secreted. Acts as a decoy receptor for TNFSF11/RANKL and thereby neutralizes its function in osteoclastogenesis. Inhibits the activation of osteoclasts and promotes osteoclast apoptosis. Bone homeostasis seems to depend on the local ratio between TNFSF11 and TNFRSF11B. May also play a role in preventing arterial calcification. May act as decoy receptor for TNFSF10/TRAIL and protect against apoptosis. TNFSF10/TRAIL binding blocks the inhibition of osteoclastogenesis. The polypeptide is Tumor necrosis factor receptor superfamily member 11B (TNFRSF11B) (Bos taurus (Bovine)).